Here is a 130-residue protein sequence, read N- to C-terminus: Small ribosomal subunit protein uS8 (130 aa).

It belongs to the universal ribosomal protein uS8 family. Part of the 30S ribosomal subunit. Contacts proteins S5 and S12.

One of the primary rRNA binding proteins, it binds directly to 16S rRNA central domain where it helps coordinate assembly of the platform of the 30S subunit. This is Small ribosomal subunit protein uS8 from Marinomonas sp. (strain MWYL1).